We begin with the raw amino-acid sequence, 362 residues long: NAD(P)H-quinone oxidoreductase subunit 1, chloroplastic (362 aa).

8 helical membrane-spanning segments follow: residues 29–49, 103–123, 128–148, 164–184, 202–222, 247–267, 303–323, and 335–355; these read ILPI…IVWL, IAVI…HFVL, IGVF…LMAG, AAQS…ISLL, FFGW…ISSL, YSGI…LVSS, TIGI…SITI, and LLNL…LLTT.

The protein belongs to the complex I subunit 1 family. NDH is composed of at least 16 different subunits, 5 of which are encoded in the nucleus.

The protein resides in the plastid. It localises to the chloroplast thylakoid membrane. It carries out the reaction a plastoquinone + NADH + (n+1) H(+)(in) = a plastoquinol + NAD(+) + n H(+)(out). The enzyme catalyses a plastoquinone + NADPH + (n+1) H(+)(in) = a plastoquinol + NADP(+) + n H(+)(out). NDH shuttles electrons from NAD(P)H:plastoquinone, via FMN and iron-sulfur (Fe-S) centers, to quinones in the photosynthetic chain and possibly in a chloroplast respiratory chain. The immediate electron acceptor for the enzyme in this species is believed to be plastoquinone. Couples the redox reaction to proton translocation, and thus conserves the redox energy in a proton gradient. This Agrostis stolonifera (Creeping bentgrass) protein is NAD(P)H-quinone oxidoreductase subunit 1, chloroplastic.